The primary structure comprises 152 residues: MENNLNLCNQTNYRFRYKKDFQNILDEIALFFKEKLPLELDLNIVDNILIKKISKQYYKKDKETDVLSFPSELANMKNALGFFHIGEIFLNYEKVILQAKEYNHSLKREFCYLFTHGIIHLYGYDHVKENEAKEMNAIVESIMQKLNIKRRK.

3 residues coordinate Zn(2+): H116, H120, and H126.

Belongs to the endoribonuclease YbeY family. It depends on Zn(2+) as a cofactor.

The protein localises to the cytoplasm. In terms of biological role, single strand-specific metallo-endoribonuclease involved in late-stage 70S ribosome quality control and in maturation of the 3' terminus of the 16S rRNA. This chain is Endoribonuclease YbeY, found in Mycoplasma mobile (strain ATCC 43663 / 163K / NCTC 11711) (Mesomycoplasma mobile).